Here is a 211-residue protein sequence, read N- to C-terminus: UPF0319 protein VC_A0026 (211 aa).

The first 21 residues, M1 to A21, serve as a signal peptide directing secretion.

This sequence belongs to the UPF0319 family.

The polypeptide is UPF0319 protein VC_A0026 (Vibrio cholerae serotype O1 (strain ATCC 39315 / El Tor Inaba N16961)).